The primary structure comprises 272 residues: Insertion element IS600 uncharacterized 31 kDa protein (272 aa).

The Integrase catalytic domain maps to 105–268 (APTAPNQVWV…SPAAFREKYH (164 aa)).

The sequence is that of Insertion element IS600 uncharacterized 31 kDa protein from Shigella sonnei.